The following is a 180-amino-acid chain: Adenine phosphoribosyltransferase (180 aa).

Belongs to the purine/pyrimidine phosphoribosyltransferase family. As to quaternary structure, homodimer.

The protein localises to the cytoplasm. It carries out the reaction AMP + diphosphate = 5-phospho-alpha-D-ribose 1-diphosphate + adenine. It participates in purine metabolism; AMP biosynthesis via salvage pathway; AMP from adenine: step 1/1. Functionally, catalyzes a salvage reaction resulting in the formation of AMP, that is energically less costly than de novo synthesis. This is Adenine phosphoribosyltransferase from Butyrivibrio fibrisolvens.